We begin with the raw amino-acid sequence, 119 residues long: Protein TusC (119 aa).

The protein belongs to the DsrF/TusC family. In terms of assembly, heterohexamer, formed by a dimer of trimers. The hexameric TusBCD complex contains 2 copies each of TusB, TusC and TusD. The TusBCD complex interacts with TusE.

It is found in the cytoplasm. Part of a sulfur-relay system required for 2-thiolation of 5-methylaminomethyl-2-thiouridine (mnm(5)s(2)U) at tRNA wobble positions. This Escherichia fergusonii (strain ATCC 35469 / DSM 13698 / CCUG 18766 / IAM 14443 / JCM 21226 / LMG 7866 / NBRC 102419 / NCTC 12128 / CDC 0568-73) protein is Protein TusC.